Reading from the N-terminus, the 206-residue chain is Large ribosomal subunit protein uL4 (206 aa).

Positions 47–71 (TRAQKGRSEVAGSTRKQWRQKGTGR) are disordered.

The protein belongs to the universal ribosomal protein uL4 family. In terms of assembly, part of the 50S ribosomal subunit.

Its function is as follows. One of the primary rRNA binding proteins, this protein initially binds near the 5'-end of the 23S rRNA. It is important during the early stages of 50S assembly. It makes multiple contacts with different domains of the 23S rRNA in the assembled 50S subunit and ribosome. Forms part of the polypeptide exit tunnel. The protein is Large ribosomal subunit protein uL4 of Nitrosomonas eutropha (strain DSM 101675 / C91 / Nm57).